Reading from the N-terminus, the 361-residue chain is tRNA/tmRNA (uracil-C(5))-methyltransferase (361 aa).

Glutamine 185, tyrosine 213, asparagine 218, glutamate 234, and aspartate 294 together coordinate S-adenosyl-L-methionine. The active-site Nucleophile is cysteine 319. Glutamate 353 (proton acceptor) is an active-site residue.

It belongs to the class I-like SAM-binding methyltransferase superfamily. RNA M5U methyltransferase family. TrmA subfamily.

The enzyme catalyses uridine(54) in tRNA + S-adenosyl-L-methionine = 5-methyluridine(54) in tRNA + S-adenosyl-L-homocysteine + H(+). The catalysed reaction is uridine(341) in tmRNA + S-adenosyl-L-methionine = 5-methyluridine(341) in tmRNA + S-adenosyl-L-homocysteine + H(+). Dual-specificity methyltransferase that catalyzes the formation of 5-methyluridine at position 54 (m5U54) in all tRNAs, and that of position 341 (m5U341) in tmRNA (transfer-mRNA). The chain is tRNA/tmRNA (uracil-C(5))-methyltransferase from Pseudomonas savastanoi pv. phaseolicola (strain 1448A / Race 6) (Pseudomonas syringae pv. phaseolicola (strain 1448A / Race 6)).